The chain runs to 229 residues: Non-structural protein V (229 aa).

Composition is skewed to polar residues over residues 30 to 46 and 82 to 112; these read ATSQSSLNKPPSQSSRT and GRQNLDSLSMISNKPQTGTLLMGSDTQLPSP. Positions 30–112 are disordered; it reads ATSQSSLNKP…MGSDTQLPSP (83 aa). His-178, Cys-197, Cys-201, Cys-213, Cys-215, Cys-218, Cys-222, and Cys-225 together coordinate Zn(2+).

Belongs to the paramyxoviruses V protein family.

In terms of biological role, blocks host interferon signaling. The sequence is that of Non-structural protein V (P/V) from Homo sapiens (Human).